The primary structure comprises 514 residues: Pentatricopeptide repeat-containing protein At4g26800 (514 aa).

PPR repeat units lie at residues 122–156 (DLYT…GIEP), 157–191 (DIVT…GIKR), 192–226 (DVVV…GISP), 227–261 (NVVT…KINP), 262–296 (NVIT…SIDP), 297–331 (NVFT…GCTP), 332–366 (NVVT…GVAA), 367–401 (NTVS…GLIP), 402–436 (NIRS…RNDL), 437–471 (DIIT…RVEP), and 472–510 (DFKA…ESAP).

This sequence belongs to the PPR family. P subfamily.

The chain is Pentatricopeptide repeat-containing protein At4g26800 from Arabidopsis thaliana (Mouse-ear cress).